The following is a 365-amino-acid chain: U-box domain-containing protein 56 (365 aa).

Residues 176–281 are a coiled coil; it reads YEEQRRRLEI…ELLRALEKGE (106 aa). The U-box domain maps to 293 to 365; that stretch reads EPPQCFICPI…AIKDWLQQHP (73 aa).

It carries out the reaction S-ubiquitinyl-[E2 ubiquitin-conjugating enzyme]-L-cysteine + [acceptor protein]-L-lysine = [E2 ubiquitin-conjugating enzyme]-L-cysteine + N(6)-ubiquitinyl-[acceptor protein]-L-lysine.. It functions in the pathway protein modification; protein ubiquitination. Functions as an E3 ubiquitin ligase. This Arabidopsis thaliana (Mouse-ear cress) protein is U-box domain-containing protein 56 (PUB56).